The chain runs to 297 residues: Glutamyl-Q tRNA(Asp) synthetase (297 aa).

L-glutamate-binding positions include R9–S13 and E45. A 'HIGH' region motif is present at residues P12 to S22. Residues C101, C103, and C118 each contribute to the Zn(2+) site. Y170 and R188 together coordinate L-glutamate. Positions K226–S230 match the 'KMSKS' region motif. Residue K229 participates in ATP binding.

This sequence belongs to the class-I aminoacyl-tRNA synthetase family. GluQ subfamily. It depends on Zn(2+) as a cofactor.

Catalyzes the tRNA-independent activation of glutamate in presence of ATP and the subsequent transfer of glutamate onto a tRNA(Asp). Glutamate is transferred on the 2-amino-5-(4,5-dihydroxy-2-cyclopenten-1-yl) moiety of the queuosine in the wobble position of the QUC anticodon. This is Glutamyl-Q tRNA(Asp) synthetase from Xanthomonas campestris pv. campestris (strain 8004).